The primary structure comprises 441 residues: UDP-N-acetylmuramoylalanine--D-glutamate ligase (441 aa).

129-135 (GTNGKST) lines the ATP pocket.

The protein belongs to the MurCDEF family.

It localises to the cytoplasm. The enzyme catalyses UDP-N-acetyl-alpha-D-muramoyl-L-alanine + D-glutamate + ATP = UDP-N-acetyl-alpha-D-muramoyl-L-alanyl-D-glutamate + ADP + phosphate + H(+). Its pathway is cell wall biogenesis; peptidoglycan biosynthesis. In terms of biological role, cell wall formation. Catalyzes the addition of glutamate to the nucleotide precursor UDP-N-acetylmuramoyl-L-alanine (UMA). This Zymomonas mobilis subsp. mobilis (strain ATCC 31821 / ZM4 / CP4) protein is UDP-N-acetylmuramoylalanine--D-glutamate ligase.